Here is a 159-residue protein sequence, read N- to C-terminus: Oleosin Cor a 12 (159 aa).

Positions 1–10 (MADRPQQLQV) are enriched in polar residues. A disordered region spans residues 1–24 (MADRPQQLQVHPQRGHGHYEGGIK). 3 consecutive transmembrane segments (helical) span residues 45 to 65 (VGGTLLALAGLTLAGSVIGLL), 70 to 90 (LFIIFSPVLVPAAIVVGLAVA), and 92 to 112 (FLSSGALGLTGLSSLSWVLNY).

The protein belongs to the oleosin family. Expressed in seeds.

It is found in the lipid droplet. The protein resides in the membrane. Its function is as follows. May have a structural role to stabilize the lipid body during desiccation of the seed by preventing coalescence of the oil. Probably interacts with both lipid and phospholipid moieties of lipid bodies. May also provide recognition signals for specific lipase anchorage in lipolysis during seedling growth. The sequence is that of Oleosin Cor a 12 from Corylus avellana (European hazel).